The following is a 118-amino-acid chain: Hydrogenase maturation factor HypA (118 aa).

His-2 is a Ni(2+) binding site. Zn(2+) contacts are provided by Cys-73, Cys-76, Cys-89, and Cys-92.

The protein belongs to the HypA/HybF family.

Functionally, involved in the maturation of [NiFe] hydrogenases. Required for nickel insertion into the metal center of the hydrogenase. This is Hydrogenase maturation factor HypA from Shewanella oneidensis (strain ATCC 700550 / JCM 31522 / CIP 106686 / LMG 19005 / NCIMB 14063 / MR-1).